We begin with the raw amino-acid sequence, 260 residues long: MTPPTTGLPAENTTDDNDHLVQSDDPEHPANLIPSLCAKFWTLGWVTGTGGGASIRDDDLVYLAPSGVQKELMKPSDIYVLSLAAQAQSLSRRQRVYLRSPPVYKPSQCTPLFLAAFTKRNAGCCIHTHSHWAVLVTLILEQQGSKEFRINNIEQIKGFGKGFQKSGNLGYHDTLVIPVIENTAHEEDLTEFLEEAMDKYPDTYAVLVRRHGVYVWGDNVHKAKTQCESLDYLFQLAVEMKQLGLPWITDIEPTIPTRKD.

The interval 1–26 (MTPPTTGLPAENTTDDNDHLVQSDDP) is disordered. The span at 16-26 (DNDHLVQSDDP) shows a compositional bias: basic and acidic residues. C109 provides a ligand contact to substrate. 2 residues coordinate Zn(2+): H127 and H129. Catalysis depends on E154, which acts as the Proton donor/acceptor. H211 lines the Zn(2+) pocket.

This sequence belongs to the aldolase class II family. MtnB subfamily. Requires Zn(2+) as cofactor.

Its subcellular location is the cytoplasm. The enzyme catalyses 5-(methylsulfanyl)-D-ribulose 1-phosphate = 5-methylsulfanyl-2,3-dioxopentyl phosphate + H2O. The protein operates within amino-acid biosynthesis; L-methionine biosynthesis via salvage pathway; L-methionine from S-methyl-5-thio-alpha-D-ribose 1-phosphate: step 2/6. In terms of biological role, catalyzes the dehydration of methylthioribulose-1-phosphate (MTRu-1-P) into 2,3-diketo-5-methylthiopentyl-1-phosphate (DK-MTP-1-P). The chain is Methylthioribulose-1-phosphate dehydratase from Podospora anserina (strain S / ATCC MYA-4624 / DSM 980 / FGSC 10383) (Pleurage anserina).